A 399-amino-acid polypeptide reads, in one-letter code: Multi-drug resistance efflux pump PmrA (399 aa).

A run of 10 helical transmembrane segments spans residues 12 to 34, 49 to 71, 84 to 106, 140 to 162, 167 to 186, 217 to 239, 248 to 270, 306 to 328, 340 to 362, and 366 to 388; these read IAWF…MPIF, AGLA…GILA, GLAM…LIFL, LSTG…AELF, VFLL…ICFI, LFLT…ALYV, LLFV…AGVM, LGLY…NALL, VFAF…GSAV, and FGYH…FNLI.

Belongs to the major facilitator superfamily. TCR/Tet family.

The protein resides in the cell membrane. Efflux pump for various substrates. The protein is Multi-drug resistance efflux pump PmrA (pmrA) of Streptococcus pneumoniae serotype 4 (strain ATCC BAA-334 / TIGR4).